Here is a 930-residue protein sequence, read N- to C-terminus: Protein translocase subunit SecA (930 aa).

ATP is bound by residues Gln87, 105-109 (GEGKT), and Asp515. The Zn(2+) site is built by Cys914, Cys916, Cys925, and His926.

This sequence belongs to the SecA family. As to quaternary structure, monomer and homodimer. Part of the essential Sec protein translocation apparatus which comprises SecA, SecYEG and auxiliary proteins SecDF-YajC and YidC. It depends on Zn(2+) as a cofactor.

The protein localises to the cell inner membrane. The protein resides in the cytoplasm. The enzyme catalyses ATP + H2O + cellular proteinSide 1 = ADP + phosphate + cellular proteinSide 2.. Its function is as follows. Part of the Sec protein translocase complex. Interacts with the SecYEG preprotein conducting channel. Has a central role in coupling the hydrolysis of ATP to the transfer of proteins into and across the cell membrane, serving both as a receptor for the preprotein-SecB complex and as an ATP-driven molecular motor driving the stepwise translocation of polypeptide chains across the membrane. This is Protein translocase subunit SecA from Burkholderia vietnamiensis (strain G4 / LMG 22486) (Burkholderia cepacia (strain R1808)).